The sequence spans 91 residues: Small ribosomal subunit protein bS18 (91 aa).

This sequence belongs to the bacterial ribosomal protein bS18 family. In terms of assembly, part of the 30S ribosomal subunit. Forms a tight heterodimer with protein bS6.

Its function is as follows. Binds as a heterodimer with protein bS6 to the central domain of the 16S rRNA, where it helps stabilize the platform of the 30S subunit. The sequence is that of Small ribosomal subunit protein bS18 from Thiobacillus denitrificans (strain ATCC 25259 / T1).